A 186-amino-acid polypeptide reads, in one-letter code: ATP synthase subunit delta (186 aa).

It belongs to the ATPase delta chain family. In terms of assembly, F-type ATPases have 2 components, F(1) - the catalytic core - and F(0) - the membrane proton channel. F(1) has five subunits: alpha(3), beta(3), gamma(1), delta(1), epsilon(1). F(0) has three main subunits: a(1), b(2) and c(10-14). The alpha and beta chains form an alternating ring which encloses part of the gamma chain. F(1) is attached to F(0) by a central stalk formed by the gamma and epsilon chains, while a peripheral stalk is formed by the delta and b chains.

Its subcellular location is the cell inner membrane. Functionally, f(1)F(0) ATP synthase produces ATP from ADP in the presence of a proton or sodium gradient. F-type ATPases consist of two structural domains, F(1) containing the extramembraneous catalytic core and F(0) containing the membrane proton channel, linked together by a central stalk and a peripheral stalk. During catalysis, ATP synthesis in the catalytic domain of F(1) is coupled via a rotary mechanism of the central stalk subunits to proton translocation. In terms of biological role, this protein is part of the stalk that links CF(0) to CF(1). It either transmits conformational changes from CF(0) to CF(1) or is implicated in proton conduction. This is ATP synthase subunit delta from Brucella anthropi (strain ATCC 49188 / DSM 6882 / CCUG 24695 / JCM 21032 / LMG 3331 / NBRC 15819 / NCTC 12168 / Alc 37) (Ochrobactrum anthropi).